The following is a 499-amino-acid chain: Pentatricopeptide repeat-containing protein PPR5, chloroplastic (499 aa).

Positions 1-12 (MLACPSTSSPWP) are enriched in low complexity. The interval 1-28 (MLACPSTSSPWPQRQPPSPCPGGGGGAT) is disordered. The N-terminal 45 residues, 1-45 (MLACPSTSSPWPQRQPPSPCPGGGGGATRHVALAARSKRRGAGPA), are a transit peptide targeting the chloroplast. PPR repeat units lie at residues 123–157 (DNGI…GCKP), 158–193 (DTSV…KCIE), 198–232 (TIVT…VVSP), 233–267 (DVYT…QCRP), 268–302 (DVIT…KERP), 303–337 (THPT…GFKP), 338–372 (NYVT…QTKV), 373–407 (HLSS…CVVP), and 408–442 (NGST…GIVP). The tract at residues 458 to 499 (DRKPRTSPGINSASKPSTDSAGDSETATSDKPEVSVWHVAAT) is disordered. The segment covering 465–484 (PGINSASKPSTDSAGDSETA) has biased composition (polar residues).

Belongs to the PPR family. P subfamily.

Its subcellular location is the plastid. The protein localises to the chloroplast. In terms of biological role, involved in the biogenesis of the plastid translation machinery by promoting the splicing of group II introns in chloroplasts. Stabilizes the chloroplast trnG pre-RNA by directly binding to a group II intron, where it protects an endonuclease-sensitive site and stimulates splicing. Binds specific sites within group II intron trnG pre-RNA. Binds with high affinity to the 5'-UTR of the chloroplastic petA mRNA. The chain is Pentatricopeptide repeat-containing protein PPR5, chloroplastic from Zea mays (Maize).